A 116-amino-acid chain; its full sequence is Flagellar hook-basal body complex protein FliE (116 aa).

The protein belongs to the FliE family.

It is found in the bacterial flagellum basal body. In Rhizobium rhizogenes (strain K84 / ATCC BAA-868) (Agrobacterium radiobacter), this protein is Flagellar hook-basal body complex protein FliE.